Reading from the N-terminus, the 358-residue chain is E3 ubiquitin-protein ligase SIS3 (358 aa).

The signal sequence occupies residues 1 to 27; sequence MAMRGVDFKWYDGFFLSMLATSVIIVA. 3 helical membrane passes run 40–60, 85–105, and 125–145; these read LHIWIVVDYTTVFIFRVFMFV, VVVLSVLSLLLYPFLWAWTVI, and GFLIWLMFSYCGLLCIAFICV. The RING-type; atypical zinc-finger motif lies at 235-276; the sequence is CLICLEEFHIGHEVRGLPCAHNFHVECIDQWLRLNVKCPRCR. The segment at 336–358 is disordered; that stretch reads TALETAENGGVPPVLTDLSPSRR.

In terms of tissue distribution, expressed in roots, stems, leaves, flowers and siliques.

The protein resides in the membrane. It carries out the reaction S-ubiquitinyl-[E2 ubiquitin-conjugating enzyme]-L-cysteine + [acceptor protein]-L-lysine = [E2 ubiquitin-conjugating enzyme]-L-cysteine + N(6)-ubiquitinyl-[acceptor protein]-L-lysine.. Its pathway is protein modification; protein ubiquitination. In terms of biological role, E3 ubiquitin protein ligase that acts as a positive regulator of sugar signaling during early seedling development. Possesses E3 ligase activity in vitro. The sequence is that of E3 ubiquitin-protein ligase SIS3 (SIS3) from Arabidopsis thaliana (Mouse-ear cress).